Reading from the N-terminus, the 133-residue chain is MSNHDPISDMLTRIRNASQKKHTTTSIPSSKMSLSIAKVLQKEGFISDINEEGEGYKSQIILGLKYSGKNKFPTIRSMQRVSKPGLRIYKNTRALPKVLGGLGVAIISTSKGVMSDRDARKQGIGGEVLCYVY.

Belongs to the universal ribosomal protein uS8 family. In terms of assembly, part of the 30S ribosomal subunit. Contacts proteins S5 and S12.

Functionally, one of the primary rRNA binding proteins, it binds directly to 16S rRNA central domain where it helps coordinate assembly of the platform of the 30S subunit. The protein is Small ribosomal subunit protein uS8 of Prochlorococcus marinus (strain MIT 9301).